The chain runs to 789 residues: Protein translocase subunit SecA (789 aa).

ATP is bound by residues Q85, 103–107 (GEGKT), and D492.

Belongs to the SecA family. As to quaternary structure, monomer and homodimer. Part of the essential Sec protein translocation apparatus which comprises SecA, SecYEG and auxiliary proteins SecDF. Other proteins may also be involved.

It is found in the cell membrane. The protein localises to the cytoplasm. The enzyme catalyses ATP + H2O + cellular proteinSide 1 = ADP + phosphate + cellular proteinSide 2.. Part of the Sec protein translocase complex. Interacts with the SecYEG preprotein conducting channel. Has a central role in coupling the hydrolysis of ATP to the transfer of proteins into and across the cell membrane, serving as an ATP-driven molecular motor driving the stepwise translocation of polypeptide chains across the membrane. In Limosilactobacillus fermentum (strain NBRC 3956 / LMG 18251) (Lactobacillus fermentum), this protein is Protein translocase subunit SecA.